Consider the following 303-residue polypeptide: Dihydroorotate dehydrogenase B (NAD(+)), catalytic subunit (303 aa).

FMN contacts are provided by residues Ser21 and Lys45–Gly46. Substrate contacts are provided by residues Lys45 and Asn69–Leu73. Residues Asn99 and Asn127 each coordinate FMN. Substrate is bound at residue Asn127. Residue Cys130 is the Nucleophile of the active site. FMN is bound by residues Lys165 and Ile191. Asn192–Thr193 contributes to the substrate binding site. FMN contacts are provided by residues Gly217, Gly243–Gly244, and Gly265–Thr266.

It belongs to the dihydroorotate dehydrogenase family. Type 1 subfamily. In terms of assembly, heterotetramer of 2 PyrK and 2 PyrD type B subunits. FMN is required as a cofactor.

It localises to the cytoplasm. The catalysed reaction is (S)-dihydroorotate + NAD(+) = orotate + NADH + H(+). It functions in the pathway pyrimidine metabolism; UMP biosynthesis via de novo pathway; orotate from (S)-dihydroorotate (NAD(+) route): step 1/1. Functionally, catalyzes the conversion of dihydroorotate to orotate with NAD(+) as electron acceptor. This is Dihydroorotate dehydrogenase B (NAD(+)), catalytic subunit (pyrD) from Bacteroides fragilis (strain ATCC 25285 / DSM 2151 / CCUG 4856 / JCM 11019 / LMG 10263 / NCTC 9343 / Onslow / VPI 2553 / EN-2).